Here is a 309-residue protein sequence, read N- to C-terminus: Taste receptor type 2 member 31 (309 aa).

Over 1-2 the chain is Extracellular; sequence MT. A helical transmembrane segment spans residues 3–23; sequence TFIPIIFSSVVVVLFVIGNFA. The Cytoplasmic portion of the chain corresponds to 24-55; it reads NGFIALVNSIERVKRQKISFADQILTALAVSR. A helical transmembrane segment spans residues 56 to 76; that stretch reads VGLLWVLLLNWYSTVFNPAFY. Residues 77 to 100 are Extracellular-facing; the sequence is SVEVRTTAYNVWAVTGHFSNWLAT. A helical membrane pass occupies residues 101 to 121; that stretch reads SLSIFYLLKIANFSNLIFLHL. Residues 122-126 lie on the Cytoplasmic side of the membrane; sequence KRRVK. Residues 127-147 form a helical membrane-spanning segment; that stretch reads SVILVMLLGPLLFLACQLFVI. The Extracellular segment spans residues 148–181; it reads NMKEIVRTKEYEGNLTWKIKLRSAVYLSDATVTT. A glycan (N-linked (GlcNAc...) asparagine) is linked at Asn-161. The helical transmembrane segment at 182–202 threads the bilayer; that stretch reads LGNLVPFTLTLLCFLLLICSL. Residues 203 to 229 are Cytoplasmic-facing; the sequence is CKHLKKMQLHGKGSQDPSTKVHIKALQ. Residues 230–250 form a helical membrane-spanning segment; sequence TVIFFLLLCAVYFLSIMISVW. At 251–259 the chain is on the extracellular side; it reads SFGSLENKP. The chain crosses the membrane as a helical span at residues 260–280; sequence VFMFCKAIRFSYPSIHPFILI. The Cytoplasmic portion of the chain corresponds to 281–309; that stretch reads WGNKKLKQTFLSVLRQVRYWVKGEKPSSP.

The protein belongs to the G-protein coupled receptor T2R family. As to expression, expressed in subsets of taste receptor cells of the tongue and exclusively in gustducin-positive cells.

The protein resides in the membrane. Its function is as follows. Receptor that may play a role in the perception of bitterness and is gustducin-linked. May play a role in sensing the chemical composition of the gastrointestinal content. The activity of this receptor may stimulate alpha gustducin, mediate PLC-beta-2 activation and lead to the gating of TRPM5. Activated by the sulfonyl amide sweeteners saccharin and acesulfame K. The protein is Taste receptor type 2 member 31 (TAS2R31) of Homo sapiens (Human).